A 151-amino-acid chain; its full sequence is Large ribosomal subunit protein uL22 (151 aa).

This sequence belongs to the universal ribosomal protein uL22 family. Part of the 50S ribosomal subunit.

This protein binds specifically to 23S rRNA. It makes multiple contacts with different domains of the 23S rRNA in the assembled 50S subunit and ribosome. In terms of biological role, the globular domain of the protein is located near the polypeptide exit tunnel on the outside of the subunit, while an extended beta-hairpin is found that lines the wall of the exit tunnel in the center of the 70S ribosome. In Thermofilum pendens (strain DSM 2475 / Hrk 5), this protein is Large ribosomal subunit protein uL22.